Here is a 286-residue protein sequence, read N- to C-terminus: MSDWSALHQLLEKVQPYSTAGGKVWIKVLFIFRILLLGTAIESAWSDEQFEFHCNTQQPGCENVCYDQAFPISHVRLWVLQVIFVSVPTLLHLAHVYYVIRQNEKLKKQEEEELKVAHFNGASGERRLQKHTGKHIKCGSKEHGNRKMRGRLLLTYMASIFFKSVFEVAFLLIQWYLYGFTLSAVYICEQSPCPHRVDCFLSRPTEKTIFILFMLVVSMVSFVLNVIELFYVLFKAIKNHLGNEKEEVYCNPVELQKPSCVSSSAVLTTICSSDQVVPVGLSSFYM.

At 1-23 the chain is on the cytoplasmic side; it reads MSDWSALHQLLEKVQPYSTAGGK. A helical transmembrane segment spans residues 24 to 41; the sequence is VWIKVLFIFRILLLGTAI. Over 42–76 the chain is Extracellular; that stretch reads ESAWSDEQFEFHCNTQQPGCENVCYDQAFPISHVR. A helical transmembrane segment spans residues 77-99; that stretch reads LWVLQVIFVSVPTLLHLAHVYYV. The Cytoplasmic segment spans residues 100–151; sequence IRQNEKLKKQEEEELKVAHFNGASGERRLQKHTGKHIKCGSKEHGNRKMRGR. A helical transmembrane segment spans residues 152-174; sequence LLLTYMASIFFKSVFEVAFLLIQ. The Extracellular portion of the chain corresponds to 175 to 209; the sequence is WYLYGFTLSAVYICEQSPCPHRVDCFLSRPTEKTI. Residues 210 to 232 traverse the membrane as a helical segment; that stretch reads FILFMLVVSMVSFVLNVIELFYV. Residues 233-286 lie on the Cytoplasmic side of the membrane; that stretch reads LFKAIKNHLGNEKEEVYCNPVELQKPSCVSSSAVLTTICSSDQVVPVGLSSFYM.

The protein belongs to the connexin family. Alpha-type (group II) subfamily. A connexon is composed of a hexamer of connexins. In terms of tissue distribution, expressed in testis.

The protein resides in the cell membrane. The protein localises to the cell junction. Its subcellular location is the gap junction. Functionally, one gap junction consists of a cluster of closely packed pairs of transmembrane channels, the connexons, through which materials of low MW diffuse from one cell to a neighboring cell. The sequence is that of Gap junction alpha-6 protein (Gja6) from Rattus norvegicus (Rat).